Consider the following 362-residue polypeptide: Peptide chain release factor 1 (362 aa).

Glutamine 237 bears the N5-methylglutamine mark.

It belongs to the prokaryotic/mitochondrial release factor family. Post-translationally, methylated by PrmC. Methylation increases the termination efficiency of RF1.

Its subcellular location is the cytoplasm. In terms of biological role, peptide chain release factor 1 directs the termination of translation in response to the peptide chain termination codons UAG and UAA. In Vibrio parahaemolyticus serotype O3:K6 (strain RIMD 2210633), this protein is Peptide chain release factor 1.